Here is a 1863-residue protein sequence, read N- to C-terminus: C-myc promoter-binding protein (1863 aa).

Positions 42-200 constitute an MABP domain; the sequence is KEPITDVSVI…AVYLCYKKSV (159 aa). The 173-residue stretch at 192 to 364 folds into the uDENN domain; it reads VYLCYKKSVA…KVPFPSPQRP (173 aa). Residues 385-521 form the cDENN domain; the sequence is PLPLSGGKFS…PCKNLMNTLN (137 aa). The dDENN domain maps to 523–641; it reads LHQQLAKLQQ…CSFVSDKDAS (119 aa). Position 731 is a phosphoserine (S731). PPR repeat units lie at residues 772–808 and 809–843; these read WFIC…MDPP and DEVC…GIDP. The disordered stretch occupies residues 905-952; the sequence is DLGYNSLSKDEVRRGDTSTEDIQEEKDKKGSDCSSLSESESTKGSADC. The span at 912–921 shows a compositional bias: basic and acidic residues; that stretch reads SKDEVRRGDT. The short motif at 917–933 is the Bipartite nuclear localization signal element; sequence RRGDTSTEDIQEEKDKK. Over residues 936-949 the composition is skewed to low complexity; that stretch reads DCSSLSESESTKGS. S1015, S1035, S1099, S1151, and S1152 each carry phosphoserine. Residues 1075–1111 form a disordered region; sequence TRPNTLDIGKPPLRSKRDSLEKESSDDDTPFDGSNYL. Residues 1177-1202 form a disordered region; that stretch reads TEQQQKEEEEEDEDDSKSISTPSARR. A phosphoserine mark is found at S1225, S1240, and S1251. Disordered regions lie at residues 1237–1306 and 1348–1375; these read NKKS…SPSF and SKDQ…TDED. Over residues 1269-1279 the composition is skewed to basic and acidic residues; that stretch reads TKSEEKPRDRL. S1281 is subject to Phosphoserine. Composition is skewed to polar residues over residues 1297 to 1306 and 1348 to 1371; these read DTLTHSSPSF and SKDQ…STSL. A phosphoserine mark is found at S1508, S1587, S1589, and S1591.

As to expression, expressed ubiquitously. Highest expression in bone marrow, medium in peripheral blood lymphocytes and lowest in spleen. In brain, breast, and prostate, higher expression was seen in normal cells than in tumor cells. Expression is regulated in a growth- and cell cycle-dependent manner.

Its subcellular location is the nucleus. Functionally, probable guanine nucleotide exchange factor (GEF) which may activate RAB10. Promotes the exchange of GDP to GTP, converting inactive GDP-bound Rab proteins into their active GTP-bound form. According to PubMed:8056341, it may bind to ISRE-like element (interferon-stimulated response element) of MYC P2 promoter. This chain is C-myc promoter-binding protein (DENND4A), found in Homo sapiens (Human).